We begin with the raw amino-acid sequence, 659 residues long: Ion-translocating oxidoreductase complex subunit C (659 aa).

2 4Fe-4S ferredoxin-type domains span residues 366-397 (TEMG…QQLY) and 407-436 (KARN…VQYY). Positions 377, 380, 383, 387, 416, 419, 422, and 426 each coordinate [4Fe-4S] cluster.

It belongs to the 4Fe4S bacterial-type ferredoxin family. RnfC subfamily. In terms of assembly, the complex is composed of six subunits: RnfA, RnfB, RnfC, RnfD, RnfE and RnfG. It depends on [4Fe-4S] cluster as a cofactor.

It localises to the cell inner membrane. In terms of biological role, part of a membrane-bound complex that couples electron transfer with translocation of ions across the membrane. The chain is Ion-translocating oxidoreductase complex subunit C from Yersinia pseudotuberculosis serotype IB (strain PB1/+).